The primary structure comprises 195 residues: NADH dehydrogenase [ubiquinone] iron-sulfur protein 3 (195 aa).

It belongs to the complex I 30 kDa subunit family. In terms of assembly, complex I is composed of about 45 different subunits. This is a component of the iron-sulfur (IP) fragment of the enzyme.

It localises to the mitochondrion inner membrane. The enzyme catalyses a ubiquinone + NADH + 5 H(+)(in) = a ubiquinol + NAD(+) + 4 H(+)(out). Its function is as follows. Core subunit of the mitochondrial membrane respiratory chain NADH dehydrogenase (Complex I) that is believed to belong to the minimal assembly required for catalysis. Complex I functions in the transfer of electrons from NADH to the respiratory chain. The immediate electron acceptor for the enzyme is believed to be ubiquinone. The sequence is that of NADH dehydrogenase [ubiquinone] iron-sulfur protein 3 (NAD9) from Marchantia polymorpha (Common liverwort).